A 445-amino-acid polypeptide reads, in one-letter code: Phosphoglucosamine mutase 1 (445 aa).

The active-site Phosphoserine intermediate is the Ser102. Positions 102, 241, 243, and 245 each coordinate Mg(2+). The residue at position 102 (Ser102) is a Phosphoserine.

The protein belongs to the phosphohexose mutase family. Requires Mg(2+) as cofactor. Post-translationally, activated by phosphorylation.

The catalysed reaction is alpha-D-glucosamine 1-phosphate = D-glucosamine 6-phosphate. Its function is as follows. Catalyzes the conversion of glucosamine-6-phosphate to glucosamine-1-phosphate. This is Phosphoglucosamine mutase 1 from Shewanella sp. (strain MR-7).